The following is a 704-amino-acid chain: Elongation factor G (704 aa).

A tr-type G domain is found at 8–291 (DKVRNIGIMA…AVVEYLASPV (284 aa)). GTP-binding positions include 17–24 (AHIDAGKT), 90–94 (DTPGH), and 144–147 (NKMD).

The protein belongs to the TRAFAC class translation factor GTPase superfamily. Classic translation factor GTPase family. EF-G/EF-2 subfamily.

It localises to the cytoplasm. Catalyzes the GTP-dependent ribosomal translocation step during translation elongation. During this step, the ribosome changes from the pre-translocational (PRE) to the post-translocational (POST) state as the newly formed A-site-bound peptidyl-tRNA and P-site-bound deacylated tRNA move to the P and E sites, respectively. Catalyzes the coordinated movement of the two tRNA molecules, the mRNA and conformational changes in the ribosome. The sequence is that of Elongation factor G from Chlorobium phaeobacteroides (strain DSM 266 / SMG 266 / 2430).